A 481-amino-acid polypeptide reads, in one-letter code: Pentatricopeptide repeat-containing protein At2g48000 (481 aa).

PPR repeat units follow at residues 147–181 (TTSVYNALMGAYLCNGLSHHCEQLFLDFNSQQDGP), 187–221 (SVSTYNILISLYGRLIMVERMESVFLQLQQLNILP), 222–256 (DSSTYNNLIAGYIYAWDWDKMEATFHSMKNGLVKP), 257–287 (TLATYLLMLRGYANSGNLLRMEDMYQAVKRH), 292–324 (EIKLIESMICAYYRSCHKDRIRKIKTLSKLIPK), 328–362 (KPWLYLLLMQVYAKDDNLHAMENFIDQAITKGLQI), 364–398 (TDGIMRSIVASYFRCNAVDKLAKFVQRANSAGWKM), 399–433 (SRSMFHGLMIMYGSQKRFKEMENVLSEMESFKISR), and 434–469 (SKKTLCILLRVYAATHGQEHKVNQVAGMMLKHGHDF).

It belongs to the PPR family. P subfamily.

The protein is Pentatricopeptide repeat-containing protein At2g48000 of Arabidopsis thaliana (Mouse-ear cress).